A 578-amino-acid chain; its full sequence is L-2,3-diaminopropanoate--citrate ligase (578 aa).

It belongs to the IucA/IucC family. As to quaternary structure, forms a mixture of monomer and dimer in solution.

The enzyme catalyses (S)-2,3-diaminopropanoate + citrate + ATP = 2-[(L-alanin-3-ylcarbamoyl)methyl]-2-hydroxybutanedioate + AMP + diphosphate. The protein operates within siderophore biosynthesis. In terms of biological role, catalyzes the synthesis of citryl-L-2,3-diaminopropionic acid from L-2,3-diaminopropionic acid (L-Dap) and citrate, the first step in staphyloferrin B biosynthesis. This is L-2,3-diaminopropanoate--citrate ligase from Staphylococcus aureus (strain NCTC 8325 / PS 47).